We begin with the raw amino-acid sequence, 279 residues long: Tryptophan synthase alpha chain (279 aa).

Catalysis depends on proton acceptor residues E49 and D60.

Belongs to the TrpA family. In terms of assembly, tetramer of two alpha and two beta chains.

The catalysed reaction is (1S,2R)-1-C-(indol-3-yl)glycerol 3-phosphate + L-serine = D-glyceraldehyde 3-phosphate + L-tryptophan + H2O. The protein operates within amino-acid biosynthesis; L-tryptophan biosynthesis; L-tryptophan from chorismate: step 5/5. The alpha subunit is responsible for the aldol cleavage of indoleglycerol phosphate to indole and glyceraldehyde 3-phosphate. In Nitrosospira multiformis (strain ATCC 25196 / NCIMB 11849 / C 71), this protein is Tryptophan synthase alpha chain.